Consider the following 705-residue polypeptide: Elongation factor G (705 aa).

The region spanning 8–290 (ERYRNFGIMA…GVVHLLPSPA (283 aa)) is the tr-type G domain. GTP contacts are provided by residues 17–24 (AHIDAGKT), 88–92 (DTPGH), and 142–145 (NKMD). The interval 290–309 (ADRPPVQGIDEDEKEDTRAA) is disordered.

This sequence belongs to the TRAFAC class translation factor GTPase superfamily. Classic translation factor GTPase family. EF-G/EF-2 subfamily.

Its subcellular location is the cytoplasm. In terms of biological role, catalyzes the GTP-dependent ribosomal translocation step during translation elongation. During this step, the ribosome changes from the pre-translocational (PRE) to the post-translocational (POST) state as the newly formed A-site-bound peptidyl-tRNA and P-site-bound deacylated tRNA move to the P and E sites, respectively. Catalyzes the coordinated movement of the two tRNA molecules, the mRNA and conformational changes in the ribosome. The chain is Elongation factor G from Xanthomonas axonopodis pv. citri (strain 306).